The primary structure comprises 65 residues: MSEEKFDAKVDKVSGSVKESVGKLTGDKEVESEGKVDKLKGHAKEKLADIKDTIKGASESFKKKD.

Residues 1-12 (MSEEKFDAKVDK) show a composition bias toward basic and acidic residues. Positions 1–29 (MSEEKFDAKVDKVSGSVKESVGKLTGDKE) are disordered.

This sequence belongs to the UPF0337 (CsbD) family.

The protein is UPF0337 protein gbs1203 of Streptococcus agalactiae serotype III (strain NEM316).